Here is a 474-residue protein sequence, read N- to C-terminus: MSYQITINNNTTSNVQNIVIADPNLASLGENVVFSDSQGPLSSLYVYDGVWVIKLRSPLSPGQSITITASSGTPNIDPTIALYYNNGSSYSNLTLVGSPTVSIVQDFGGYAISAYASGDFFLVASPTGFTPSSSRLLVVDRWATTPTSLDAVGLRLYADTNDWFGVVRKYVNGAQNVSIEQKISGTYSVVNEIDISQFAAFTDPLVMYLSINGSTANVKVYKQGSNIGTVSGNYSTTPYGNPSMAGYGTVDKHYANFIVLPYEPDPQVTVTPISSPSPTPTPTPTPTPTPTPTPTPTPTPTPTPTPTPTPTPTPTPTPTPTPTPTPTPTPTPTPTPTPTPTPTPTPTPTPTPTPTPTPTPTPTPTPTYDITYVVFDVTPSPTPTPTPTPTPTPTPTPTPTPTPTPTPTPTPTPTPTPTPTPTPTPTPTPTPTPTPTYDITYVIFDVTPSPTPTPTPTPTPTPTPTPTSTTSSNI.

Positions V268–I474 are disordered. The segment covering S275–T365 has biased composition (pro residues). The stretch at P278 to T367 is one Thr-Pro(N) repeat. The 3 Thr-Pro repeats regions and two near identical repeats stretch occupies residues P278–T467. The segment at residues Y368 to V377 is a repeat. One copy of the Thr-Pro(N) repeat lies at T378–T436. The segment covering S380–T434 has biased composition (pro residues). A repeat spans Y437–V446. A Thr-Pro(N) repeat occupies T447 to T467. Pro residues predominate over residues S449–T465.

The chain is Viral protein TPX from Thermoproteus tenax virus 1 (strain VT3) (TTV1).